Consider the following 302-residue polypeptide: MTFDQRLLLVHAHPDDESIGQGATMAKYAAEGRGVTLVTCTGGEMGEILVPELTHLAADQEDRLGEHRRGELDAAMAELGVTDHRYLGGFGTYRDSGMKWHEDGHAVPADDIHQNAFWHADLTEAADHLVAVIREVRPQVLVTYDQFGGYGHPDHIQAHRVATYAAALAAVPSYRKDLGAAWDIAKIYWGAMSESRMRAALRALREAGDTTAFEGMDPDGPLPPFVTADEDLSAVVDAQEHVEAKLAAMRAHATQITTDGPFFALSNNVGNVAWGLEFFRLAKGERGELNQDGLETDLFAGL.

Zn(2+) is bound by residues histidine 13, aspartate 16, and histidine 155.

It belongs to the MshB deacetylase family. Requires Zn(2+) as cofactor.

The catalysed reaction is 1D-myo-inositol 2-acetamido-2-deoxy-alpha-D-glucopyranoside + H2O = 1D-myo-inositol 2-amino-2-deoxy-alpha-D-glucopyranoside + acetate. In terms of biological role, catalyzes the deacetylation of 1D-myo-inositol 2-acetamido-2-deoxy-alpha-D-glucopyranoside (GlcNAc-Ins) in the mycothiol biosynthesis pathway. In Nocardioides sp. (strain ATCC BAA-499 / JS614), this protein is 1D-myo-inositol 2-acetamido-2-deoxy-alpha-D-glucopyranoside deacetylase.